The following is a 64-amino-acid chain: Conotoxin reg3k (64 aa).

The N-terminal stretch at 1–20 is a signal peptide; it reads MMFKLGVLLTICLLLFPLTA. Positions 21 to 48 are excised as a propeptide; it reads LQLDWDQPGDHMLDISSEIDDRWFDPVR. 3 disulfides stabilise this stretch: C50–C60, C51–C58, and C56–C61. 4-hydroxyproline is present on P59.

As to expression, expressed by the venom duct.

It is found in the secreted. The sequence is that of Conotoxin reg3k from Conus regius (Crown cone).